The primary structure comprises 796 residues: Protein translocase subunit SecA 2 (796 aa).

Residues Gln84, 102–106, and Asp496 each bind ATP; that span reads GEGKT.

Belongs to the SecA family. Monomer and homodimer. Part of the essential Sec protein translocation apparatus which comprises SecA, SecYEG and auxiliary proteins SecDF. Other proteins may also be involved.

It is found in the cell membrane. The protein localises to the cytoplasm. The enzyme catalyses ATP + H2O + cellular proteinSide 1 = ADP + phosphate + cellular proteinSide 2.. Its function is as follows. Part of the Sec protein translocase complex. Interacts with the SecYEG preprotein conducting channel. Has a central role in coupling the hydrolysis of ATP to the transfer of proteins into and across the cell membrane, serving as an ATP-driven molecular motor driving the stepwise translocation of polypeptide chains across the membrane. This chain is Protein translocase subunit SecA 2, found in Staphylococcus epidermidis (strain ATCC 12228 / FDA PCI 1200).